We begin with the raw amino-acid sequence, 182 residues long: UPF0397 protein YdcD (182 aa).

5 helical membrane-spanning segments follow: residues 8–28 (IVVA…LINI), 42–62 (AVLA…IGFI), 74–94 (APWW…AFGV), 114–134 (IVQF…GDVL), and 146–166 (QGIV…TLLL).

This sequence belongs to the UPF0397 family.

It is found in the cell membrane. The protein is UPF0397 protein YdcD (ydcD) of Lactococcus lactis subsp. lactis (strain IL1403) (Streptococcus lactis).